Consider the following 380-residue polypeptide: MTDYPIKYRLIKTEKHTGARLGEIITPHGTFPTPMFMPVGTQATVKTQSPEELKAIGSGIILSNTYHLWLRPGDELIARSGGLHKFMNWDQPILTDSGGFQVYSLADSRNITEEGVTFKNHLNGSKMFLSPEKAISIQNNLGSDIMMSFDECPQFYQPYDYVKKSIERTSRWAERGLKAHRRPHDQGLFGIVQGAGFEDLRRQSAADLVAMDFLGYSIGGLAVGESHEEMNAVLDFTTPLLPENKPRYLMGVGAPDSLIDGVIRGVDMFDCVLPTRIARNGTCMTSEGRLVIKNAKFAEDFTPLDHDCDCYTCQNYSRAYIRHLLKADETFGIRLTSYHNLYFLVNLMKKVRQAIMDDNLLEFRQDFLERYGYNKSNRNF.

Asp-96 acts as the Proton acceptor in catalysis. Substrate-binding positions include 96–100 (DSGGF), Asp-150, Gln-193, and Gly-220. Residues 251-257 (GVGAPDS) form an RNA binding region. The active-site Nucleophile is the Asp-270. The tract at residues 275-279 (TRIAR) is RNA binding; important for wobble base 34 recognition. The Zn(2+) site is built by Cys-308, Cys-310, Cys-313, and His-339.

This sequence belongs to the queuine tRNA-ribosyltransferase family. In terms of assembly, homodimer. Within each dimer, one monomer is responsible for RNA recognition and catalysis, while the other monomer binds to the replacement base PreQ1. Zn(2+) is required as a cofactor.

The catalysed reaction is 7-aminomethyl-7-carbaguanine + guanosine(34) in tRNA = 7-aminomethyl-7-carbaguanosine(34) in tRNA + guanine. It participates in tRNA modification; tRNA-queuosine biosynthesis. Its function is as follows. Catalyzes the base-exchange of a guanine (G) residue with the queuine precursor 7-aminomethyl-7-deazaguanine (PreQ1) at position 34 (anticodon wobble position) in tRNAs with GU(N) anticodons (tRNA-Asp, -Asn, -His and -Tyr). Catalysis occurs through a double-displacement mechanism. The nucleophile active site attacks the C1' of nucleotide 34 to detach the guanine base from the RNA, forming a covalent enzyme-RNA intermediate. The proton acceptor active site deprotonates the incoming PreQ1, allowing a nucleophilic attack on the C1' of the ribose to form the product. After dissociation, two additional enzymatic reactions on the tRNA convert PreQ1 to queuine (Q), resulting in the hypermodified nucleoside queuosine (7-(((4,5-cis-dihydroxy-2-cyclopenten-1-yl)amino)methyl)-7-deazaguanosine). The polypeptide is Queuine tRNA-ribosyltransferase (Streptococcus pyogenes serotype M6 (strain ATCC BAA-946 / MGAS10394)).